Consider the following 214-residue polypeptide: Thymidylate kinase (214 aa).

ATP is bound at residue glycine 10–threonine 17.

It belongs to the thymidylate kinase family.

The enzyme catalyses dTMP + ATP = dTDP + ADP. Phosphorylation of dTMP to form dTDP in both de novo and salvage pathways of dTTP synthesis. This Bartonella quintana (strain Toulouse) (Rochalimaea quintana) protein is Thymidylate kinase.